A 454-amino-acid chain; its full sequence is Replicative DNA helicase DnaB (454 aa).

The N-terminal domain (NTD) stretch occupies residues 1–149 (MSELFSERIP…LDEADRKIME (149 aa)). Residues 163 to 176 (KDILVQTYDNIEML) form a linker helix region. An SF4 helicase domain is found at 179 to 445 (RDGEITGIPT…NKFVNLERRF (267 aa)). Residues 183–454 (ITGIPTGFTE…FDEAQIPPGA (272 aa)) are C-terminal domain (CTD). Residues Ser-213, Gly-215, Lys-216, Thr-217, and Ala-218 each contribute to the ATP site. The Nucleophile role is filled by Glu-241. Residues Arg-250 and Gln-362 each contribute to the ATP site. The ssDNA site is built by Arg-381, Glu-382, and Gly-384. 3 residues coordinate ATP: Lys-418, Gln-419, and Arg-420.

It belongs to the helicase family. DnaB subfamily. In terms of assembly, homohexamer. Interacts with DnaG primase, as DnaB(6):DnaG(3). Interacts with the N-terminus of DnaI (shown with DnaI of B.subtilis), forms a helicase DnaB(6):DnaI(6) complex. The DnaB-DnaI complex is disrupted by DnaD (DnaD and DnaI from B.subtilis). A stable complex DnaI(6):DnaB(6):DnaG(3) fragment can be isolated; DnaI and DnaG do not contact each other (DnaI in this complex is derived from B.subtilis). Forms a complex with DNA clamp loader protein tau (shown with B.subtilis HolA) tau(3):DnaB(6); a single ATP hydrolysis even is sufficient for complex formation.

The catalysed reaction is Couples ATP hydrolysis with the unwinding of duplex DNA at the replication fork by translocating in the 5'-3' direction. This creates two antiparallel DNA single strands (ssDNA). The leading ssDNA polymer is the template for DNA polymerase III holoenzyme which synthesizes a continuous strand.. It carries out the reaction ATP + H2O = ADP + phosphate + H(+). Its function is as follows. The main replicative DNA helicase, it participates in initiation and elongation during chromosome replication. Travels ahead of the DNA replisome, separating double-stranded (ds)DNA into templates for DNA synthesis. Binding of single-stranded (ss)DNA to the hexamer suggests a 2-nucleotide step size for the helicase and a hand-over-hand mechanism of DNA unwinding. Has ssDNA-stimulated ATPase activity. DnaG primase stimulates the helicase activity (the helicase direction was not determine but is probably 5'-3'). Loaded onto DNA by helicase loader DnaI (shown with DnaI of B.subtilis); ATP-binding enhances loading and subsequent ATP hydrolysis dissociates the complex, leaving helicase on the DNA. Binds ssDNA and less well dsDNA, in the presence of ADPNP (probably 5'-adenylyl beta, gamma-imidodiphosphate, but not ATP) binding to both DNAs is improved. This chain is Replicative DNA helicase DnaB, found in Geobacillus stearothermophilus (Bacillus stearothermophilus).